We begin with the raw amino-acid sequence, 216 residues long: Protein-L-isoaspartate O-methyltransferase 1 (216 aa).

Ser-60 is an active-site residue.

The protein belongs to the methyltransferase superfamily. L-isoaspartyl/D-aspartyl protein methyltransferase family.

The protein localises to the cytoplasm. It catalyses the reaction [protein]-L-isoaspartate + S-adenosyl-L-methionine = [protein]-L-isoaspartate alpha-methyl ester + S-adenosyl-L-homocysteine. Catalyzes the methyl esterification of L-isoaspartyl residues in peptides and proteins that result from spontaneous decomposition of normal L-aspartyl and L-asparaginyl residues. It plays a role in the repair and/or degradation of damaged proteins. The chain is Protein-L-isoaspartate O-methyltransferase 1 (pcm1) from Archaeoglobus fulgidus (strain ATCC 49558 / DSM 4304 / JCM 9628 / NBRC 100126 / VC-16).